Here is a 1561-residue protein sequence, read N- to C-terminus: Adhesion G protein-coupled receptor B2 (1561 aa).

The N-terminal stretch at M1–A20 is a signal peptide. Residues F21–L930 lie on the Extracellular side of the membrane. Residues N94, N182, and N183 are each glycosylated (N-linked (GlcNAc...) asparagine). An O-linked (Xyl...) (chondroitin sulfate) serine glycan is attached at S257. TSP type-1 domains are found at residues D300–P353, H355–P408, E410–P463, and D466–P519. Intrachain disulfides connect C312-C346, C316-C352, C327-C336, C367-C402, C371-C407, C382-C392, C422-C457, C426-C462, C437-C447, C478-C513, C482-C518, C493-C503, C525-C560, and C548-C578. An N-linked (GlcNAc...) asparagine glycan is attached at N347. N428 is a glycosylation site (N-linked (GlcNAc...) asparagine). 2 N-linked (GlcNAc...) asparagine glycosylation sites follow: N551 and N636. A GAIN-B domain is found at D748–L918. Residues L757–L797 form a disordered region. Positions S760 to S775 are enriched in low complexity. The N-linked (GlcNAc...) asparagine glycan is linked to N861. Disulfide bonds link C868–C900 and C888–C902. Positions C868–L918 are GPS. The chain crosses the membrane as a helical span at residues V931–F951. The Cytoplasmic portion of the chain corresponds to W952–R959. Residues S960–G980 traverse the membrane as a helical segment. Residues Q981–G988 are Extracellular-facing. A helical transmembrane segment spans residues V989–L1009. The Cytoplasmic segment spans residues T1010–K1030. Residues R1031–T1051 traverse the membrane as a helical segment. Residues R1052–Y1072 lie on the Extracellular side of the membrane. The helical transmembrane segment at A1073–F1093 threads the bilayer. Residues N1094 to R1115 are Cytoplasmic-facing. A helical membrane pass occupies residues C1116–L1136. The Extracellular portion of the chain corresponds to S1137 to S1147. The helical transmembrane segment at L1148–A1168 threads the bilayer. At M1169 to V1561 the chain is on the cytoplasmic side. Y1345 carries the post-translational modification Phosphotyrosine. 3 disordered regions span residues L1355–R1377, F1417–T1447, and R1491–V1561. Residues E1366 to P1376 show a composition bias toward basic and acidic residues. Over residues R1491–P1502 the composition is skewed to basic and acidic residues. Polar residues predominate over residues S1519–L1528. Acidic residues predominate over residues E1551–V1561.

The protein belongs to the G-protein coupled receptor 2 family. Adhesion G-protein coupled receptor (ADGR) subfamily. As to quaternary structure, heterodimer of 2 chains generated by proteolytic processing; the large extracellular N-terminal fragment and the membrane-bound C-terminal fragment predominantly remain associated and non-covalently linked. Interacts with GABPB2. Interacts (via carboxy-terminus) with TAX1BP3. Interacts with GNAZ. Interacts with SH3GL2. Glycosylated. In terms of processing, autoproteolytically processed at the GPS region of the GAIN-B domain; this cleavage modulates receptor activity. Additionally, furin is involved in the cleavage at another site, in the middle of the extracellular domain, generating a soluble fragment. In terms of tissue distribution, specifically expressed in the brain. The peak level in the brain is observed 10 days after birth.

The protein resides in the cell membrane. It is found in the secreted. With respect to regulation, receptor activity is regulated by proteolytic processing. The long N-terminal has a an inhibitory effect on the constitutive signaling activity. Removal of the N-terminal region induces an increase of the receptor activity. Its function is as follows. Orphan G-protein coupled receptor involved in cell adhesion and probably in cell-cell interactions. Activates NFAT-signaling pathway, a transcription factor, via the G-protein GNAZ. Involved in angiogenesis inhibition. This Mus musculus (Mouse) protein is Adhesion G protein-coupled receptor B2 (Adgrb2).